Here is a 457-residue protein sequence, read N- to C-terminus: L-asparaginase-like protein GA18140 (457 aa).

Positions 1-20 are cleaved as a signal peptide; that stretch reads MRYLCRAQLLSLLLLPLLKA. 3 cysteine pairs are disulfide-bonded: cysteine 72–cysteine 78, cysteine 172–cysteine 188, and cysteine 327–cysteine 354.

It belongs to the Ntn-hydrolase family.

The chain is L-asparaginase-like protein GA18140 from Drosophila pseudoobscura pseudoobscura (Fruit fly).